Consider the following 182-residue polypeptide: ATP synthase subunit delta, mitochondrial (182 aa).

The transit peptide at 1–17 (MFRTFGRRLVSCTLPLL) directs the protein to the mitochondrion.

This sequence belongs to the ATPase epsilon chain family. As to quaternary structure, F-type ATPases have 2 components, F(1) - the catalytic core - and F(o) - the membrane proton channel. F(1) has five subunits: alpha(3), beta(3), gamma(1), delta(1), epsilon(1), plus the additional subunit P18 (Tb427.05.1710) that is not present in F(1)F(o) ATP synthase from metazoa. Subunit P18 (Tb927.5.1710) interacts with the alpha subunit with a 1:1 stoichiometry; the interaction is direct. Subunit gamma is part of the central stalk. F(o) has three main subunits: a, b and c. The trypanosomal ATPase complex contains additional subunits that are not present in the F(1)F(o) ATP synthase from metazoa.

The protein resides in the mitochondrion. It localises to the mitochondrion inner membrane. Its function is as follows. Mitochondrial membrane ATP synthase (F(1)F(o) ATP synthase) produces ATP from ADP in the presence of a proton gradient across the membrane which is generated by electron transport complexes of the respiratory chain. F-type ATPases consist of two structural domains, F(1) - containing the extramembraneous catalytic core, and F(o) - containing the membrane proton channel, linked together by a central stalk and a peripheral stalk. During catalysis, ATP synthesis in the catalytic domain of F(1) is coupled via a rotary mechanism of the central stalk subunits to proton translocation. Subunits alpha and beta form the catalytic core in F(1). Rotation of the central stalk against the surrounding alpha(3)beta(3) subunits leads to hydrolysis of ATP in three separate catalytic sites on the beta subunits. Contrary to the procyclic, insect form that requires F(1)F(o) ATP synthase for ATP synthesis, the bloodstream form relies on ATP hydrolysis by F(1)F(o) ATP synthase to maintain its mitochondrial membrane potential. This chain is ATP synthase subunit delta, mitochondrial, found in Trypanosoma brucei brucei.